Here is a 415-residue protein sequence, read N- to C-terminus: rRNA methyltransferase 3, mitochondrial (415 aa).

A mitochondrion-targeting transit peptide spans 1–47 (MAALCRGTVRACILKPLGLSVSLQVKRNVRALRRTPVRVLPAAEKGR). The interval 41–73 (PAAEKGRERKEVEARRPQQPRQSEYQTRTSQGV) is disordered. Basic and acidic residues predominate over residues 44–56 (EKGRERKEVEARR). Residues 59 to 73 (QPRQSEYQTRTSQGV) are compositionally biased toward polar residues. The S-adenosyl-L-methionine site is built by Gly-357, Ile-381, and Leu-390.

It belongs to the class IV-like SAM-binding methyltransferase superfamily. RNA methyltransferase TrmH family.

It localises to the mitochondrion. The enzyme catalyses a uridine in rRNA + S-adenosyl-L-methionine = a 2'-O-methyluridine in rRNA + S-adenosyl-L-homocysteine + H(+). In terms of biological role, S-adenosyl-L-methionine-dependent 2'-O-ribose methyltransferase that catalyzes the formation of 2'-O-methylguanosine at position 1370 (Gm1370) in the mitochondrial large subunit ribosomal RNA (mtLSU rRNA), a conserved modification in the peptidyl transferase domain of the mtLSU rRNA. Also required for formation of 2'-O-methyluridine at position 1369 (Um1369) mediated by MRM2. In Xenopus tropicalis (Western clawed frog), this protein is rRNA methyltransferase 3, mitochondrial.